The primary structure comprises 377 residues: MADFLPSRSVLSVCFPGCLLTSGEAEQQRKSKEIDKCLSREKTYVKRLVKILLLGAGESGKSTFLKQMRIIHGQDFDQRAREEFRPTIYSNVIKGMRVLVDAREKLHIPWGDNSNQQHGDKMMSFDTRAPMAAQGMVETRVFLQYLPAIRALWADSGIQNAYDRRREFQLGESVKYFLDNLDKLGEPDYIPSQQDILLARRPTKGIHEYDFEIKNVPFKMVDVGGQRSERKRWFECFDSVTSILFLVSSSEFDQVLMEDRLTNRLTESLNIFETIVNNRVFSNVSIILFLNKTDLLEEKVQIVSIKDYFLEFEGDPHCLRDVQKFLVECFRNKRRDQQQKPLYHHFTTAINTENIRLVFRDVKDTILHDNLKQLMLQ.

2 S-palmitoyl cysteine lipidation sites follow: cysteine 14 and cysteine 18. In terms of domain architecture, G-alpha spans 47-377 (RLVKILLLGA…HDNLKQLMLQ (331 aa)). The interval 50-63 (KILLLGAGESGKST) is G1 motif. Residues 58–63 (ESGKST), serine 173, and 197–200 (LLAR) contribute to the GTP site. Serine 62 is a binding site for Mg(2+). The tract at residues 195-203 (DILLARRPT) is G2 motif. A Mg(2+)-binding site is contributed by threonine 203. Threonine 203 carries the post-translational modification Phosphothreonine; by PKA. The segment at 218–227 (FKMVDVGGQR) is G3 motif. The segment at 287–294 (ILFLNKTD) is G4 motif. Residues 291 to 294 (NKTD) and alanine 349 each bind GTP. The interval 347-352 (TTAINT) is G5 motif.

This sequence belongs to the G-alpha family. G(12) subfamily. G proteins are composed of 3 units; alpha, beta and gamma. The alpha chain contains the guanine nucleotide binding site. Interacts with UBXD5. Interacts with HAX1. Interacts (in GTP-bound form) with PPP5C (via TPR repeats); activates PPP5C phosphatase activity and translocates PPP5C to the cell membrane. Interacts with RGS22. Interacts (in GTP-bound form) with ARHGEF1. Interacts (in GTP-bound form) with ARHGEF11 (via RGS domain). Interacts (in GTP-bound form) with ARHGEF12 (via RGS domain). Interacts with CTNND1. Interacts with GASL2L2. Interacts with GPR35. Interacts with GPR174. Palmitoylation is critical for proper membrane localization and signaling. In terms of processing, phosphorylation on Thr-203 by PKA destabilizes the heterotrimer of alpha, beta and gamma, and inhibits Rho activation. As to expression, expressed in testis, including in Leydig cells and in the seminiferous epithelium, in differentiating cells from the spermatogonia to mature spermatozoa stages and round spermatids (at protein level). Expressed in 99.2% of spermatozoa from healthy individuals, but only in 28.6% of macrocephalic spermatozoa from infertile patients (at protein level).

It is found in the cell membrane. The protein resides in the melanosome. It localises to the cytoplasm. The protein localises to the nucleus. Guanine nucleotide-binding proteins (G proteins) are involved as modulators or transducers in various transmembrane signaling systems. Activates effector molecule RhoA by binding and activating RhoGEFs (ARHGEF1/p115RhoGEF, ARHGEF11/PDZ-RhoGEF and ARHGEF12/LARG). GNA13-dependent Rho signaling subsequently regulates transcription factor AP-1 (activating protein-1). Promotes tumor cell invasion and metastasis by activating RhoA/ROCK signaling pathway. Inhibits CDH1-mediated cell adhesion in a process independent from Rho activation. In lymphoid follicles, transmits P2RY8- and S1PR2-dependent signals that lead to inhibition of germinal center (GC) B cell growth and migration outside the GC niche. The chain is Guanine nucleotide-binding protein subunit alpha-13 (GNA13) from Homo sapiens (Human).